The chain runs to 68 residues: Copper transport protein ATOX1 (68 aa).

The HMA domain maps to 1–63 (MPKHEFSVDM…TLNKTGKAVS (63 aa)). 2 residues coordinate Cu cation: Cys-12 and Cys-15. At Ser-47 the chain carries Phosphoserine. At Lys-60 the chain carries N6-acetyllysine.

Belongs to the ATX1 family. As to quaternary structure, homodimer. Interacts with ATP7B. Interacts with ATP7A. Interacts (via dimer form) with SLC31A1 (via C-terminal domain); this interaction improves ATOX1 stability and controls intracellular Cu(I) levels.

Binds and deliver cytosolic copper to the copper ATPase proteins. May be important in cellular antioxidant defense. This chain is Copper transport protein ATOX1, found in Rattus norvegicus (Rat).